The primary structure comprises 44 residues: Antibacterial protein 3 (44 aa).

M1 carries the N-formylmethionine modification.

Belongs to the staphylococcal hemolytic protein family.

It localises to the secreted. Functionally, has hemolytic activity and also inhibits the growth of gonococci. This chain is Antibacterial protein 3, found in Staphylococcus haemolyticus.